A 128-amino-acid chain; its full sequence is Gastrotropin (128 aa).

Alanine 2 carries the N-acetylalanine modification.

Belongs to the calycin superfamily. Fatty-acid binding protein (FABP) family. As to expression, found exclusively in the ileum and to a lesser extent in distal jejunum.

It localises to the cytoplasm. The protein localises to the membrane. Binds to bile acids and is involved in enterohepatic bile acid metabolism. Required for efficient apical to basolateral transport of conjugated bile acids in ileal enterocytes. Stimulates gastric acid and pepsinogen secretion. In Sus scrofa (Pig), this protein is Gastrotropin (FABP6).